Consider the following 266-residue polypeptide: L-aspartate dehydrogenase (266 aa).

NAD(+) contacts are provided by A123 and N189. H219 is a catalytic residue.

This sequence belongs to the L-aspartate dehydrogenase family.

The enzyme catalyses L-aspartate + NADP(+) + H2O = oxaloacetate + NH4(+) + NADPH + H(+). It carries out the reaction L-aspartate + NAD(+) + H2O = oxaloacetate + NH4(+) + NADH + H(+). It participates in cofactor biosynthesis; NAD(+) biosynthesis; iminoaspartate from L-aspartate (dehydrogenase route): step 1/1. Functionally, specifically catalyzes the NAD or NADP-dependent dehydrogenation of L-aspartate to iminoaspartate. In Cupriavidus taiwanensis (strain DSM 17343 / BCRC 17206 / CCUG 44338 / CIP 107171 / LMG 19424 / R1) (Ralstonia taiwanensis (strain LMG 19424)), this protein is L-aspartate dehydrogenase.